The primary structure comprises 80 residues: Translation initiation factor IF-1 (80 aa).

The S1-like domain maps to 6-80 (EKKKKDESDS…TSRGRIVYRR (75 aa)).

The protein belongs to the IF-1 family. Component of the 30S ribosomal translation pre-initiation complex which assembles on the 30S ribosome in the order IF-2 and IF-3, IF-1 and N-formylmethionyl-tRNA(fMet); mRNA recruitment can occur at any time during PIC assembly.

It is found in the cytoplasm. Its function is as follows. One of the essential components for the initiation of protein synthesis. Stabilizes the binding of IF-2 and IF-3 on the 30S subunit to which N-formylmethionyl-tRNA(fMet) subsequently binds. Helps modulate mRNA selection, yielding the 30S pre-initiation complex (PIC). Upon addition of the 50S ribosomal subunit IF-1, IF-2 and IF-3 are released leaving the mature 70S translation initiation complex. The protein is Translation initiation factor IF-1 of Deinococcus radiodurans (strain ATCC 13939 / DSM 20539 / JCM 16871 / CCUG 27074 / LMG 4051 / NBRC 15346 / NCIMB 9279 / VKM B-1422 / R1).